A 166-amino-acid polypeptide reads, in one-letter code: MASITFKGNPMTLLGNEVKVGDKAPNFTVLANDLSPVTLDDSKGKVRLISVVPSIDTGVCDAQTRKFNEEAANLDGVEVLTVSVDLPFAQKRWCATAGLEQAKTLSDHRDLSFGKAYGVAIEELRLLARAVFVINANDEVTYVEYVSEATNHPDYEKAIEAAKAAL.

A Thioredoxin domain is found at 18-164 (VKVGDKAPNF…YEKAIEAAKA (147 aa)). Catalysis depends on cysteine 60, which acts as the Cysteine sulfenic acid (-SOH) intermediate. Cysteine 60 and cysteine 94 are joined by a disulfide.

The protein belongs to the peroxiredoxin family. Tpx subfamily. As to quaternary structure, homodimer.

It catalyses the reaction a hydroperoxide + [thioredoxin]-dithiol = an alcohol + [thioredoxin]-disulfide + H2O. In terms of biological role, thiol-specific peroxidase that catalyzes the reduction of hydrogen peroxide and organic hydroperoxides to water and alcohols, respectively. Plays a role in cell protection against oxidative stress by detoxifying peroxides. The chain is Thiol peroxidase from Halalkalibacterium halodurans (strain ATCC BAA-125 / DSM 18197 / FERM 7344 / JCM 9153 / C-125) (Bacillus halodurans).